A 666-amino-acid chain; its full sequence is Zinc finger MYM-type protein 5 (666 aa).

Residues Lys-85, Lys-88, Lys-146, and Lys-163 each participate in a glycyl lysine isopeptide (Lys-Gly) (interchain with G-Cter in SUMO2) cross-link. Residues Glu-87–Gln-106 are disordered. Positions Ser-191–Asp-212 are disordered. The segment covering Ser-194 to Gln-208 has biased composition (polar residues). A Glycyl lysine isopeptide (Lys-Gly) (interchain with G-Cter in SUMO2) cross-link involves residue Lys-222. MYM-type zinc fingers lie at residues His-262–Asp-296, Gln-308–Val-348, His-355–Gly-390, and Lys-401–Asn-428. Glycyl lysine isopeptide (Lys-Gly) (interchain with G-Cter in SUMO2) cross-links involve residues Lys-440, Lys-452, Lys-459, and Lys-549.

As to quaternary structure, interacts (via N-terminal 120 amino acid region) with ETV5 (via C-terminal).

It localises to the nucleus. Functionally, functions as a transcriptional regulator. This chain is Zinc finger MYM-type protein 5 (ZMYM5), found in Macaca fascicularis (Crab-eating macaque).